The chain runs to 329 residues: Galactosylgalactosylxylosylprotein 3-beta-glucuronosyltransferase 2 (329 aa).

At M1–K2 the chain is on the cytoplasmic side. Residues S3–L23 form a helical; Signal-anchor for type II membrane protein membrane-spanning segment. The Lumenal segment spans residues D24 to V329. Residues V45–T87 form a disordered region. The span at G66 to P81 shows a compositional bias: basic and acidic residues. N71 is a glycosylation site (N-linked (GlcNAc...) asparagine). UDP-alpha-D-glucuronate-binding positions include P93–Y95, D124, R161, R166, and D191–D193. Position 193 (D193) interacts with Mn(2+). Residues W240–D249 are interaction with galactose moiety of substrate glycoprotein. The Proton donor/acceptor role is filled by E279. The N-linked (GlcNAc...) asparagine glycan is linked to N298. H306–R308 is a binding site for UDP-alpha-D-glucuronate.

It belongs to the glycosyltransferase 43 family. As to quaternary structure, homodimer. The cofactor is Mn(2+).

It is found in the golgi apparatus membrane. It catalyses the reaction 3-O-(beta-D-galactosyl-(1-&gt;3)-beta-D-galactosyl-(1-&gt;4)-beta-D-xylosyl)-L-seryl-[protein] + UDP-alpha-D-glucuronate = 3-O-(beta-D-GlcA-(1-&gt;3)-beta-D-Gal-(1-&gt;3)-beta-D-Gal-(1-&gt;4)-beta-D-Xyl)-L-seryl-[protein] + UDP + H(+). It participates in protein modification; protein glycosylation. In terms of biological role, involved in the biosynthesis of L2/HNK-1 carbohydrate epitope on both glycolipids and glycoproteins. The polypeptide is Galactosylgalactosylxylosylprotein 3-beta-glucuronosyltransferase 2 (B3GAT2) (Canis lupus familiaris (Dog)).